A 399-amino-acid polypeptide reads, in one-letter code: Dihydrolipoyllysine-residue succinyltransferase component of 2-oxoglutarate dehydrogenase complex (399 aa).

The 76-residue stretch at 2-77 (AIDIKAPTFP…LSGELLGKLT (76 aa)) folds into the Lipoyl-binding domain. Lysine 43 is subject to N6-lipoyllysine. The region spanning 104–141 (ILSPAARKIAEENAIAADSITGTGKGGRVTKEDAVAAA) is the Peripheral subunit-binding (PSBD) domain. Catalysis depends on residues histidine 370 and aspartate 374.

This sequence belongs to the 2-oxoacid dehydrogenase family. Forms a 24-polypeptide structural core with octahedral symmetry. Part of the 2-oxoglutarate dehydrogenase (OGDH) complex composed of E1 (2-oxoglutarate dehydrogenase), E2 (dihydrolipoamide succinyltransferase) and E3 (dihydrolipoamide dehydrogenase); the complex contains multiple copies of the three enzymatic components (E1, E2 and E3). (R)-lipoate serves as cofactor.

The enzyme catalyses N(6)-[(R)-dihydrolipoyl]-L-lysyl-[protein] + succinyl-CoA = N(6)-[(R)-S(8)-succinyldihydrolipoyl]-L-lysyl-[protein] + CoA. It functions in the pathway amino-acid degradation; L-lysine degradation via saccharopine pathway; glutaryl-CoA from L-lysine: step 6/6. Functionally, E2 component of the 2-oxoglutarate dehydrogenase (OGDH) complex which catalyzes the second step in the conversion of 2-oxoglutarate to succinyl-CoA and CO(2). The polypeptide is Dihydrolipoyllysine-residue succinyltransferase component of 2-oxoglutarate dehydrogenase complex (sucB) (Azotobacter vinelandii).